Consider the following 348-residue polypeptide: Holliday junction branch migration complex subunit RuvB (348 aa).

The interval 4-184 (ADRLIAASGR…FGIVQRLEFY (181 aa)) is large ATPase domain (RuvB-L). ATP contacts are provided by residues I23, R24, G65, K68, T69, T70, 131–133 (EDF), R174, Y184, and R221. T69 serves as a coordination point for Mg(2+). Positions 185 to 255 (SDKDLATIVS…VADLALNLLD (71 aa)) are small ATPAse domain (RuvB-S). Positions 258 to 348 (ERGFDHSDRR…GADFSEAGDE (91 aa)) are head domain (RuvB-H). The DNA site is built by R294, R313, and R318.

The protein belongs to the RuvB family. Homohexamer. Forms an RuvA(8)-RuvB(12)-Holliday junction (HJ) complex. HJ DNA is sandwiched between 2 RuvA tetramers; dsDNA enters through RuvA and exits via RuvB. An RuvB hexamer assembles on each DNA strand where it exits the tetramer. Each RuvB hexamer is contacted by two RuvA subunits (via domain III) on 2 adjacent RuvB subunits; this complex drives branch migration. In the full resolvosome a probable DNA-RuvA(4)-RuvB(12)-RuvC(2) complex forms which resolves the HJ.

Its subcellular location is the cytoplasm. The catalysed reaction is ATP + H2O = ADP + phosphate + H(+). Its function is as follows. The RuvA-RuvB-RuvC complex processes Holliday junction (HJ) DNA during genetic recombination and DNA repair, while the RuvA-RuvB complex plays an important role in the rescue of blocked DNA replication forks via replication fork reversal (RFR). RuvA specifically binds to HJ cruciform DNA, conferring on it an open structure. The RuvB hexamer acts as an ATP-dependent pump, pulling dsDNA into and through the RuvAB complex. RuvB forms 2 homohexamers on either side of HJ DNA bound by 1 or 2 RuvA tetramers; 4 subunits per hexamer contact DNA at a time. Coordinated motions by a converter formed by DNA-disengaged RuvB subunits stimulates ATP hydrolysis and nucleotide exchange. Immobilization of the converter enables RuvB to convert the ATP-contained energy into a lever motion, pulling 2 nucleotides of DNA out of the RuvA tetramer per ATP hydrolyzed, thus driving DNA branch migration. The RuvB motors rotate together with the DNA substrate, which together with the progressing nucleotide cycle form the mechanistic basis for DNA recombination by continuous HJ branch migration. Branch migration allows RuvC to scan DNA until it finds its consensus sequence, where it cleaves and resolves cruciform DNA. This is Holliday junction branch migration complex subunit RuvB from Pseudomonas putida (strain W619).